Here is a 260-residue protein sequence, read N- to C-terminus: Uridylate kinase (260 aa).

29–32 (KLSG) provides a ligand contact to ATP. The interval 37–42 (GDLGYG) is involved in allosteric activation by GTP. Glycine 71 is a binding site for UMP. Positions 72 and 76 each coordinate ATP. UMP contacts are provided by residues aspartate 91 and 152-159 (SGNPFFTT). Positions 179, 185, and 188 each coordinate ATP.

Belongs to the UMP kinase family. Homohexamer.

It localises to the cytoplasm. It catalyses the reaction UMP + ATP = UDP + ADP. Its pathway is pyrimidine metabolism; CTP biosynthesis via de novo pathway; UDP from UMP (UMPK route): step 1/1. Allosterically activated by GTP. Inhibited by UTP. Catalyzes the reversible phosphorylation of UMP to UDP. The chain is Uridylate kinase from Synechocystis sp. (strain ATCC 27184 / PCC 6803 / Kazusa).